The chain runs to 69 residues: DNA gyrase inhibitor YacG (69 aa).

A disordered region spans residues 1–28 (MSGEGKKHGSNVEPLRPTRPCPECGRPS). Residues cysteine 21, cysteine 24, cysteine 36, and cysteine 40 each coordinate Zn(2+).

This sequence belongs to the DNA gyrase inhibitor YacG family. In terms of assembly, interacts with GyrB. It depends on Zn(2+) as a cofactor.

Functionally, inhibits all the catalytic activities of DNA gyrase by preventing its interaction with DNA. Acts by binding directly to the C-terminal domain of GyrB, which probably disrupts DNA binding by the gyrase. The polypeptide is DNA gyrase inhibitor YacG (Sinorhizobium fredii (strain NBRC 101917 / NGR234)).